Here is a 135-residue protein sequence, read N- to C-terminus: UPF0299 membrane protein ECA2828 (135 aa).

Helical transmembrane passes span 5–25, 30–50, 63–83, and 93–113; these read FIVC…LLAG, ALLP…FTLL, GCYL…VGVM, and FGPI…VVGF.

This sequence belongs to the UPF0299 family.

Its subcellular location is the cell inner membrane. In Pectobacterium atrosepticum (strain SCRI 1043 / ATCC BAA-672) (Erwinia carotovora subsp. atroseptica), this protein is UPF0299 membrane protein ECA2828.